Reading from the N-terminus, the 591-residue chain is L-fucose isomerase (591 aa).

Catalysis depends on proton acceptor residues Glu337 and Asp361. Positions 337, 361, and 528 each coordinate Mn(2+).

Belongs to the L-fucose isomerase family. Homohexamer. Mn(2+) is required as a cofactor.

It localises to the cytoplasm. It carries out the reaction L-fucose = L-fuculose. The protein operates within carbohydrate degradation; L-fucose degradation; L-lactaldehyde and glycerone phosphate from L-fucose: step 1/3. In terms of biological role, converts the aldose L-fucose into the corresponding ketose L-fuculose. This Escherichia coli (strain 55989 / EAEC) protein is L-fucose isomerase.